The following is a 212-amino-acid chain: Nitric oxide synthase (212 aa).

Y11 contributes to the heme b binding site. Residues 30-50 (KKRAIGFKKLAKAVKFSTKLM) are calmodulin-binding. A Flavodoxin-like domain is found at 60-212 (ATILYATETG…AVDTLLEELG (153 aa)). Residues 155–175 (SYSDSRKSSSDEPEHKDNFES) are disordered. Residues 158 to 173 (DSRKSSSDEPEHKDNF) show a composition bias toward basic and acidic residues. 186-212 (AFGLGSRAYPHFCAFARAVDTLLEELG) is an FMN binding site.

The protein belongs to the NOS family. Requires heme b as cofactor. It depends on FAD as a cofactor. The cofactor is FMN.

The enzyme catalyses 2 L-arginine + 3 NADPH + 4 O2 + H(+) = 2 L-citrulline + 2 nitric oxide + 3 NADP(+) + 4 H2O. In terms of biological role, produces nitric oxide (NO) which is a messenger molecule with diverse functions throughout the body. The polypeptide is Nitric oxide synthase (Squalus acanthias (Spiny dogfish)).